We begin with the raw amino-acid sequence, 399 residues long: Dual-specificity RNA methyltransferase RlmN (399 aa).

The active-site Proton acceptor is Glu-122. One can recognise a Radical SAM core domain in the interval 128–371; sequence ETDRGTLCVS…VRTPRGRDIL (244 aa). A disulfide bond links Cys-135 and Cys-374. Cys-142, Cys-146, and Cys-149 together coordinate [4Fe-4S] cluster. Residues 200-201, Ser-232, 254-256, and Asn-331 each bind S-adenosyl-L-methionine; these read GE and SLH. Cys-374 acts as the S-methylcysteine intermediate in catalysis.

Belongs to the radical SAM superfamily. RlmN family. [4Fe-4S] cluster is required as a cofactor.

It localises to the cytoplasm. It catalyses the reaction adenosine(2503) in 23S rRNA + 2 reduced [2Fe-2S]-[ferredoxin] + 2 S-adenosyl-L-methionine = 2-methyladenosine(2503) in 23S rRNA + 5'-deoxyadenosine + L-methionine + 2 oxidized [2Fe-2S]-[ferredoxin] + S-adenosyl-L-homocysteine. It carries out the reaction adenosine(37) in tRNA + 2 reduced [2Fe-2S]-[ferredoxin] + 2 S-adenosyl-L-methionine = 2-methyladenosine(37) in tRNA + 5'-deoxyadenosine + L-methionine + 2 oxidized [2Fe-2S]-[ferredoxin] + S-adenosyl-L-homocysteine. Functionally, specifically methylates position 2 of adenine 2503 in 23S rRNA and position 2 of adenine 37 in tRNAs. m2A2503 modification seems to play a crucial role in the proofreading step occurring at the peptidyl transferase center and thus would serve to optimize ribosomal fidelity. The polypeptide is Dual-specificity RNA methyltransferase RlmN (Rhodopseudomonas palustris (strain ATCC BAA-98 / CGA009)).